Reading from the N-terminus, the 191-residue chain is Apoptosis regulator BHRF1 (191 aa).

Residues 1 to 18 (MAYSTREILLALCIRDSR) form an interaction with host VRK2 region. A glycan (N-linked (GlcNAc...) asparagine; by host) is linked at Asn22. Residues 89-109 (EIFHRGDPSLGRALAWMAWCM) carry the BH1 motif. Positions 89 to 142 (EIFHRGDPSLGRALAWMAWCMHACRTLCCNQSTPYYVVDLSVRGMLEASEGLDG) are interaction with host VRK2. N-linked (GlcNAc...) asparagine; by host glycosylation is present at Asn118. A BH2 motif is present at residues 142 to 157 (GWIHQQGGWSTLIEDN). Residues 166-186 (WTLFLAGLTLSLLVICSYLFI) traverse the membrane as a helical segment.

Belongs to the Bcl-2 family. As to quaternary structure, interacts with isoform 1 of host VRK2; this interaction is involved in protecting cells from apoptosis. Interacts with host PRA1; this interaction seems to modulate BHRF1 anti-apoptotic activity. Interacts with host BCL2L11. Interacts with host BAD and BBC3. Interacts with BALF1; BALF1 acting as a negative regulator of the survival function of BHRF1. Interacts with host BECN1.

It is found in the host membrane. It localises to the host mitochondrion. Functionally, prevents premature death of the host cell during virus production, which would otherwise reduce the amount of progeny virus. Acts as a host B-cell leukemia/lymphoma 2 (Bcl-2) homolog, and interacts with pro-apoptotic proteins to prevent mitochondria permeabilization, release of cytochrome c and subsequent apoptosis of the host cell. In addition, plays a role in the inhibiton of host BECN1-mediated starvation-induced autophagy without affecting basal levels of autophagy. In Epstein-Barr virus (strain GD1) (HHV-4), this protein is Apoptosis regulator BHRF1.